The chain runs to 168 residues: MSIFSSLFKVIKKVISKVVATLKKIFKKIWPLLLIVAIIYFAPYLAGFFTSAGFTGIGGIFSSIATTITPTLTSFLSTAWSGVGSLASTAWSGFQSLGMGTQLAVVSGAAALIAPEETAQLVTEIGTTVGDIAGTIIGGVAKALPGWIWIAAGGLAVWALWPSSDSKE.

The next 4 helical transmembrane spans lie at 29–49, 52–72, 94–114, and 143–163; these read IWPLLLIVAIIYFAPYLAGFF, AGFTGIGGIFSSIATTITPTL, FQSLGMGTQLAVVSGAAALIA, and ALPGWIWIAAGGLAVWALWPS.

In terms of assembly, interacts with P3.

It localises to the virion membrane. In terms of biological role, mediates the fusion with the host outer membrane during virus entry into the host cell. This is Fusion protein P6 (P6) from Pseudomonas savastanoi pv. phaseolicola (Pseudomonas syringae pv. phaseolicola).